A 1392-amino-acid polypeptide reads, in one-letter code: Protein dispatched homolog 3 (1392 aa).

Over 1–73 (MDTEDDPLLQ…LGWAFTNPCC (73 aa)) the chain is Cytoplasmic. Positions 16-40 (EEQEEEEATGETFLGAQKPGPQPGA) are disordered. A helical transmembrane segment spans residues 74-94 (AGLVLFLGCSIPMALSAFMFL). Topologically, residues 95 to 462 (YYPPLDIDIS…YEVRRTFNND (368 aa)) are lumenal. The disordered stretch occupies residues 162-248 (GNRSRQASRA…HAAVAANQSR (87 aa)). Residue Asn163 is glycosylated (N-linked (GlcNAc...) asparagine). Polar residues predominate over residues 190 to 199 (SAAQKPTANR). Residues 457–615 (RTFNNDMLLA…LVTMPAALGL (159 aa)) enclose the SSD domain. A helical membrane pass occupies residues 463–483 (MLLAFISSSCIAALVYILTSC). Residue Ser484 is a topological domain, cytoplasmic. A helical membrane pass occupies residues 485-505 (VFLSFFGIASIGLSCLVALFL). Over 506 to 508 (YHV) the chain is Lumenal. A helical transmembrane segment spans residues 509-529 (VFGIQYLGILNGVAAFVIVGI). The Cytoplasmic segment spans residues 530-573 (GVDDVFVFINTYRQATHLEDPQLRMIHTVQTAGKATFFTSLTTA). A helical transmembrane segment spans residues 574-594 (AAYAANVFSQIPAVHDFGLFM). Position 595 (Ser595) is a topological domain, lumenal. The chain crosses the membrane as a helical span at residues 596–616 (LIVSCCWLAVLVTMPAALGLW). Topologically, residues 617 to 729 (SLYLAPLESS…WVLWSAVKSR (113 aa)) are cytoplasmic. A helical transmembrane segment spans residues 730–750 (WVIVGLFVSILILSLVFASRL). Topologically, residues 751–1182 (RPASRAPLLF…IFMEIVGVQS (432 aa)) are lumenal. A glycan (N-linked (GlcNAc...) asparagine) is linked at Asn1021. The helical transmembrane segment at 1183–1203 (ALCGLVLSLLICVAAVAVFTT) threads the bilayer. Residue His1204 is a topological domain, cytoplasmic. The helical transmembrane segment at 1205 to 1225 (ILLLLPVLLSILGIVCLVVTI) threads the bilayer. Residues 1226 to 1291 (MYWSGWEMGA…TLEAVRHVGV (66 aa)) are Lumenal-facing. The chain crosses the membrane as a helical span at residues 1292 to 1312 (AIVSSALTTVIATVPLFFCII). The Cytoplasmic segment spans residues 1313–1320 (APFAKFGK). Residues 1321-1341 (IVALNTGVSILYTLTVSTALL) form a helical membrane-spanning segment. The Lumenal portion of the chain corresponds to 1342–1358 (GIMAPSSFTRTRTSFLK). A helical membrane pass occupies residues 1359-1379 (ALGAVLLAGALGLGACLVLLQ). Residues 1380–1392 (SGYKIPLPAGASL) lie on the Cytoplasmic side of the membrane.

This sequence belongs to the patched family. Expressed in brain and testis.

The protein localises to the endoplasmic reticulum membrane. Its subcellular location is the nucleus membrane. It is found in the cytoplasmic vesicle membrane. Functionally, plays a role in neuronal proliferation and differentiation. Plays a role in the accumulation of cellular cholesterol. Involved in intracellular lipid droplet formation. May contribute to cholesterol homeostasis in neuronal cells. This chain is Protein dispatched homolog 3, found in Homo sapiens (Human).